Here is a 653-residue protein sequence, read N- to C-terminus: Multidomain regulatory protein MT1410 (653 aa).

Residues 86-142 (SGSEWRLQTDYDGSGVEERYFDFVVTPRRRADGSIEGVQLIVDDVTSRVRARQAAEA) enclose the PAC domain. In terms of domain architecture, PPM-type phosphatase spans 177-396 (DIAAEYLVAA…DDVTLLAMQR (220 aa)). Residues D211, V212, D328, and D387 each coordinate Mn(2+). Positions 397–544 (RAPTPPLHIT…TMVRRAAFQQ (148 aa)) are anti-sigma factor kinase region. The STAS domain occupies 546–653 (IDSEFVSLVE…ADTEDIFAQE (108 aa)). Position 600 is a phosphoserine (S600).

It depends on Mg(2+) as a cofactor. Mn(2+) is required as a cofactor. In terms of processing, autophosphorylated.

The enzyme catalyses O-phospho-L-seryl-[protein] + H2O = L-seryl-[protein] + phosphate. It catalyses the reaction O-phospho-L-threonyl-[protein] + H2O = L-threonyl-[protein] + phosphate. It carries out the reaction L-seryl-[protein] + ATP = O-phospho-L-seryl-[protein] + ADP + H(+). The catalysed reaction is L-threonyl-[protein] + ATP = O-phospho-L-threonyl-[protein] + ADP + H(+). Its function is as follows. Primarily acts as an independent SigF regulator that is sensitive to the osmosensory signal, mediating the cross talk of PknD with the SigF regulon. Possesses both phosphatase and kinase activities. The kinase domain functions as a classic anti-sigma factor-like kinase to phosphorylate the anti-anti-sigma factor domain at the canonical regulatory site, and the phosphatase domain antagonizes this activity. This is Multidomain regulatory protein MT1410 from Mycobacterium tuberculosis (strain CDC 1551 / Oshkosh).